The following is a 157-amino-acid chain: Small ribosomal subunit protein uS7 (157 aa).

The protein belongs to the universal ribosomal protein uS7 family. Part of the 30S ribosomal subunit. Contacts proteins S9 and S11.

In terms of biological role, one of the primary rRNA binding proteins, it binds directly to 16S rRNA where it nucleates assembly of the head domain of the 30S subunit. Is located at the subunit interface close to the decoding center, probably blocks exit of the E-site tRNA. This Pseudomonas fluorescens (strain Pf0-1) protein is Small ribosomal subunit protein uS7.